Reading from the N-terminus, the 554-residue chain is Hydroxylamine reductase (554 aa).

[2Fe-2S] cluster contacts are provided by cysteine 3, cysteine 6, cysteine 18, and cysteine 25. Positions 252, 276, 320, 408, 436, 461, 495, and 497 each coordinate hybrid [4Fe-2O-2S] cluster. Residue cysteine 408 is modified to Cysteine persulfide.

It belongs to the HCP family. [2Fe-2S] cluster is required as a cofactor. Hybrid [4Fe-2O-2S] cluster serves as cofactor.

Its subcellular location is the cytoplasm. It catalyses the reaction A + NH4(+) + H2O = hydroxylamine + AH2 + H(+). Its function is as follows. Catalyzes the reduction of hydroxylamine to form NH(3) and H(2)O. This is Hydroxylamine reductase from Shewanella baltica (strain OS185).